Here is a 574-residue protein sequence, read N- to C-terminus: Methionine--tRNA ligase (574 aa).

Residues 11 to 21 (PYINGIKHLGN) carry the 'HIGH' region motif. Cys143, Cys146, Cys156, and Cys159 together coordinate Zn(2+). A 'KMSKS' region motif is present at residues 345 to 349 (KFSTS). An ATP-binding site is contributed by Thr348.

The protein belongs to the class-I aminoacyl-tRNA synthetase family. MetG type 1 subfamily. Monomer. The cofactor is Zn(2+).

It is found in the cytoplasm. It carries out the reaction tRNA(Met) + L-methionine + ATP = L-methionyl-tRNA(Met) + AMP + diphosphate. Its function is as follows. Is required not only for elongation of protein synthesis but also for the initiation of all mRNA translation through initiator tRNA(fMet) aminoacylation. The sequence is that of Methionine--tRNA ligase from Streptomyces avermitilis (strain ATCC 31267 / DSM 46492 / JCM 5070 / NBRC 14893 / NCIMB 12804 / NRRL 8165 / MA-4680).